Here is a 259-residue protein sequence, read N- to C-terminus: tRNA pseudouridine synthase A (259 aa).

The Nucleophile role is filled by Asp52. Tyr110 serves as a coordination point for substrate.

Belongs to the tRNA pseudouridine synthase TruA family. As to quaternary structure, homodimer.

It catalyses the reaction uridine(38/39/40) in tRNA = pseudouridine(38/39/40) in tRNA. Its function is as follows. Formation of pseudouridine at positions 38, 39 and 40 in the anticodon stem and loop of transfer RNAs. This chain is tRNA pseudouridine synthase A, found in Coprothermobacter proteolyticus (strain ATCC 35245 / DSM 5265 / OCM 4 / BT).